Reading from the N-terminus, the 111-residue chain is Transcription factor S (111 aa).

Zn(2+) contacts are provided by C4, C7, C24, C27, C72, C75, C100, and C103. Residues 4 to 27 (CPKCGSMMMPRKENGKTVYKCSKC) form a C4-type zinc finger. A TFIIS-type zinc finger spans residues 68–108 (RGISCPSCGNDEAYFWILQTRSADEPATRFYKCTKCGKVWR).

Belongs to the archaeal RpoM/eukaryotic RPA12/RPB9/RPC11 RNA polymerase family.

Functionally, induces RNA cleavage activity in the RNA polymerase. In its presence, the cleavage activity of the RNA polymerase truncates the RNA back to position +15 in a stepwise manner by releasing mainly dinucleotides from the 3'-end of the nascent RNA. The truncated RNAs are able to continue elongation. Involved in transcriptional proofreading and fidelity. Misincorporation of nucleotides during elongation of transcription leads to arrested elongation complexes which are rescued by TFS-promoted removal of a dinucleotide from the 3'-end. TFS is able to induce a cleavage resynthesis cycle in stalled elongation complexes (resulting from the next missing nucleotide or a reduced incorporation rate of a wrong nucleotide) preventing misincorporation and enabling proofreading in a post-incorporation manner. Pausing of elongation complexes is the main determinant of TFS-induced RNA cleavage. The polypeptide is Transcription factor S (Sulfolobus acidocaldarius (strain ATCC 33909 / DSM 639 / JCM 8929 / NBRC 15157 / NCIMB 11770)).